The primary structure comprises 442 residues: Myb family transcription factor PHL13 (442 aa).

Positions 235-295 constitute an HTH myb-type domain; the sequence is MTSKQRMRWT…HLQKYRTARY (61 aa). Residues 266 to 291 constitute a DNA-binding region (H-T-H motif); sequence PKAVLKLINSPGLTVYHVKSHLQKYR. Residues 329–349 are coiled coil; the sequence is TEALRLQMKVQKQLHEQLEIQ. Residues 342–347 carry the LHEQLE motif; sequence LHEQLE. A compositionally biased stretch (basic and acidic residues) spans 370-380; the sequence is QQKMQENKKDS. A disordered region spans residues 370 to 442; that stretch reads QQKMQENKKD…TSNRKRVRED (73 aa). A compositionally biased stretch (polar residues) spans 395 to 434; that stretch reads SPNLSQPFLHKATNSEPSITQKLQNGSSTMDQSESTSGTS.

Belongs to the MYB-CC family.

The protein localises to the nucleus. This chain is Myb family transcription factor PHL13, found in Arabidopsis thaliana (Mouse-ear cress).